The chain runs to 190 residues: Small ribosomal subunit protein uS4c (190 aa).

The region spanning arginine 92–proline 152 is the S4 RNA-binding domain.

The protein belongs to the universal ribosomal protein uS4 family. In terms of assembly, part of the 30S ribosomal subunit. Contacts protein S5. The interaction surface between S4 and S5 is involved in control of translational fidelity.

It is found in the plastid. The protein resides in the chloroplast. Functionally, one of the primary rRNA binding proteins, it binds directly to 16S rRNA where it nucleates assembly of the body of the 30S subunit. In terms of biological role, with S5 and S12 plays an important role in translational accuracy. The chain is Small ribosomal subunit protein uS4c (rps4) from Cyanidioschyzon merolae (strain NIES-3377 / 10D) (Unicellular red alga).